A 354-amino-acid chain; its full sequence is Glycerol-1-phosphate dehydrogenase [NAD(P)+] (354 aa).

NAD(+)-binding positions include 103-107 (GRAVD) and 125-128 (TAAS). Aspartate 130 contributes to the substrate binding site. Serine 134 is a binding site for NAD(+). Aspartate 176 contacts substrate. Positions 176 and 255 each coordinate Zn(2+). Histidine 259 serves as a coordination point for substrate. Residue histidine 271 participates in Zn(2+) binding.

Belongs to the glycerol-1-phosphate dehydrogenase family. Homodimer. Zn(2+) is required as a cofactor.

The protein localises to the cytoplasm. The enzyme catalyses sn-glycerol 1-phosphate + NAD(+) = dihydroxyacetone phosphate + NADH + H(+). The catalysed reaction is sn-glycerol 1-phosphate + NADP(+) = dihydroxyacetone phosphate + NADPH + H(+). The protein operates within membrane lipid metabolism; glycerophospholipid metabolism. In terms of biological role, catalyzes the NAD(P)H-dependent reduction of dihydroxyacetonephosphate (DHAP or glycerone phosphate) to glycerol 1-phosphate (G1P). The G1P thus generated is used as the glycerophosphate backbone of phospholipids in the cellular membranes of Archaea. This is Glycerol-1-phosphate dehydrogenase [NAD(P)+] from Cenarchaeum symbiosum (strain A).